Reading from the N-terminus, the 369-residue chain is Gibberellin 3-beta-dioxygenase 2-3 (369 aa).

A Fe2OG dioxygenase domain is found at 205-306; that stretch reads MTATMHLNWY…RISLGYFLGP (102 aa). The Fe cation site is built by His-229, Asp-231, and His-287. Arg-297 is an active-site residue.

This sequence belongs to the iron/ascorbate-dependent oxidoreductase family. GA3OX subfamily. L-ascorbate serves as cofactor. The cofactor is Fe cation.

It carries out the reaction gibberellin A20 + 2-oxoglutarate + O2 = gibberellin A1 + succinate + CO2. Functionally, converts the inactive gibberellin precursors GA9 and GA20 in the bioactives gibberellins GA4 and GA1. The polypeptide is Gibberellin 3-beta-dioxygenase 2-3 (GA3ox2-3) (Triticum aestivum (Wheat)).